Reading from the N-terminus, the 355-residue chain is F-box only protein 32 (355 aa).

A Nuclear localization signal motif is present at residues 62–67 (KKRKKD). The Nuclear export signal signature appears at 169–173 (LLQTL). Positions 223–271 (LTFTDLPLCLQLNIMQRLSDGRDLVSLGQAAPDLHVLSEDRLLWKKLCQ) constitute an F-box domain. Positions 280-295 (RKRLILSDKGQLDWKK) match the Bipartite nuclear localization signal motif.

Part of the SCF (SKP1-CUL1-F-box) E3 ubiquitin-protein ligase complex SCF(FBXO32) formed of CUL1, SKP1, RBX1 and FBXO32. As to expression, specifically expressed in cardiac and skeletal muscle.

It is found in the cytoplasm. The protein resides in the nucleus. It functions in the pathway protein modification; protein ubiquitination. Its function is as follows. Substrate recognition component of a SCF (SKP1-CUL1-F-box protein) E3 ubiquitin-protein ligase complex which mediates the ubiquitination and subsequent proteasomal degradation of target proteins. Probably recognizes and binds to phosphorylated target proteins during skeletal muscle atrophy. Recognizes TERF1. This Homo sapiens (Human) protein is F-box only protein 32 (FBXO32).